Reading from the N-terminus, the 349-residue chain is Nicotinate-nucleotide--dimethylbenzimidazole phosphoribosyltransferase (349 aa).

The disordered stretch occupies residues 1-20; that stretch reads MEFATVSPPDPGTAAAARAR. The Proton acceptor role is filled by Glu313.

This sequence belongs to the CobT family.

The catalysed reaction is 5,6-dimethylbenzimidazole + nicotinate beta-D-ribonucleotide = alpha-ribazole 5'-phosphate + nicotinate + H(+). The protein operates within nucleoside biosynthesis; alpha-ribazole biosynthesis; alpha-ribazole from 5,6-dimethylbenzimidazole: step 1/2. Its function is as follows. Catalyzes the synthesis of alpha-ribazole-5'-phosphate from nicotinate mononucleotide (NAMN) and 5,6-dimethylbenzimidazole (DMB). In Mycolicibacterium paratuberculosis (strain ATCC BAA-968 / K-10) (Mycobacterium paratuberculosis), this protein is Nicotinate-nucleotide--dimethylbenzimidazole phosphoribosyltransferase.